The following is a 363-amino-acid chain: Phosphoserine aminotransferase (363 aa).

An L-glutamate-binding site is contributed by Arg-42. Residues 76–77, Trp-102, Thr-156, Asp-175, and Gln-198 contribute to the pyridoxal 5'-phosphate site; that span reads GR. Lys-199 carries the post-translational modification N6-(pyridoxal phosphate)lysine. 240–241 contributes to the pyridoxal 5'-phosphate binding site; the sequence is NT.

It belongs to the class-V pyridoxal-phosphate-dependent aminotransferase family. SerC subfamily. In terms of assembly, homodimer. Requires pyridoxal 5'-phosphate as cofactor.

It is found in the cytoplasm. The enzyme catalyses O-phospho-L-serine + 2-oxoglutarate = 3-phosphooxypyruvate + L-glutamate. It catalyses the reaction 4-(phosphooxy)-L-threonine + 2-oxoglutarate = (R)-3-hydroxy-2-oxo-4-phosphooxybutanoate + L-glutamate. It participates in amino-acid biosynthesis; L-serine biosynthesis; L-serine from 3-phospho-D-glycerate: step 2/3. Its pathway is cofactor biosynthesis; pyridoxine 5'-phosphate biosynthesis; pyridoxine 5'-phosphate from D-erythrose 4-phosphate: step 3/5. In terms of biological role, catalyzes the reversible conversion of 3-phosphohydroxypyruvate to phosphoserine and of 3-hydroxy-2-oxo-4-phosphonooxybutanoate to phosphohydroxythreonine. This chain is Phosphoserine aminotransferase, found in Shewanella sp. (strain W3-18-1).